The sequence spans 278 residues: Polyamine aminopropyltransferase (278 aa).

Residues E5–K238 enclose the PABS domain. Residue Q34 participates in S-methyl-5'-thioadenosine binding. Residues H65 and D89 each coordinate spermidine. Residues E109 and D140–G141 each bind S-methyl-5'-thioadenosine. Catalysis depends on D158, which acts as the Proton acceptor. D158–D161 is a binding site for spermidine. Position 165 (P165) interacts with S-methyl-5'-thioadenosine.

It belongs to the spermidine/spermine synthase family. As to quaternary structure, homodimer or homotetramer.

The protein resides in the cytoplasm. It catalyses the reaction S-adenosyl 3-(methylsulfanyl)propylamine + putrescine = S-methyl-5'-thioadenosine + spermidine + H(+). The protein operates within amine and polyamine biosynthesis; spermidine biosynthesis; spermidine from putrescine: step 1/1. Catalyzes the irreversible transfer of a propylamine group from the amino donor S-adenosylmethioninamine (decarboxy-AdoMet) to putrescine (1,4-diaminobutane) to yield spermidine. This chain is Polyamine aminopropyltransferase, found in Caldicellulosiruptor saccharolyticus (strain ATCC 43494 / DSM 8903 / Tp8T 6331).